We begin with the raw amino-acid sequence, 178 residues long: MSLVPEASTSRAPKYCYFFKTLLVEELELETSYHNLHYGQCALIGRLAFKANQYRLENVRVKCLPKKYSLGEGTVSLLILGLTHDKVVENRVSTGRYCIVRGEVVLHNVQHPKGAKLTAGGVYDKINSLSNDPLAQKQYLSALLATYRPAIDLWYIQVIDRAEDLLTRRLEMRSLIEK.

As to quaternary structure, probably homodimerizes. Component of the MTV complex, composed of moi/modigliani, tea and ver/verrocchio. Interacts with ver/verrochio and tea (via C-terminus); the interactions are direct and require fully intact moi/modigliani and ver/verrocchio. The MTV complex is recruited to telomeres by the HipHop-HOAP complex, consisting of HipHop, cav/HOAP and Su(var)205/HP1 to form the terminin telomere-capping complex. Interacts with cav/HOAP and Su(var)205/HP1; the interactions are direct. Probably interacts with peo (via N-terminus and UBC domain).

The protein resides in the nucleus. Its subcellular location is the chromosome. The protein localises to the telomere. In terms of biological role, part of the MTV complex that associates with the HipHop-HOAP complex to form the terminin telomere-capping complex involved in telomere maintenance and prevention of telomere fusion. Potentially functions downstream of mei-41/ATR. As part of the MTV complex binds single stranded DNA in a sequence-independent manner, protecting it from degradation. In Drosophila melanogaster (Fruit fly), this protein is Protein modigliani.